A 374-amino-acid chain; its full sequence is Speckle-type POZ protein B (374 aa).

The MATH domain occupies 31-161 (KFSYMWTINN…DDKLTLFCEV (131 aa)). A required for nuclear localization region spans residues 71–191 (VNPKGLDEES…PECRLSDELG (121 aa)). The BTB domain maps to 173–297 (QNTMNMVKVP…MCEEALCSNL (125 aa)). The homodimerization stretch occupies residues 297–355 (LSVENAAEILILADLHSADQLKTQAVDFINYHASDVMETSGWKSMVVSHPHLVAEAYRS).

Belongs to the Tdpoz family. As to quaternary structure, homodimer. Part of cullin-RING-based BCR (BTB-CUL3-RBX1) E3 ubiquitin-protein ligase complexes that contain CUL3 and SPOP, plus a target protein.

The protein localises to the nucleus. It is found in the nucleus speckle. It functions in the pathway protein modification; protein ubiquitination. Functionally, component of a cullin-RING-based BCR (BTB-CUL3-RBX1) E3 ubiquitin-protein ligase complex that mediates the ubiquitination of target proteins, leading most often to their proteasomal degradation. The polypeptide is Speckle-type POZ protein B (spop-b) (Xenopus laevis (African clawed frog)).